The primary structure comprises 447 residues: Ribosomal protein uS12 methylthiotransferase RimO (447 aa).

The MTTase N-terminal domain occupies 4–114 (PKVGFVSLGC…VMEAVHEYVP (111 aa)). Positions 13, 49, 78, 147, 151, and 154 each coordinate [4Fe-4S] cluster. Positions 133–370 (LTPKHYAYLK…MQVQQEISAA (238 aa)) constitute a Radical SAM core domain. The region spanning 373 to 443 (QKRIGQTMTV…EYDLFAKLIQ (71 aa)) is the TRAM domain.

The protein belongs to the methylthiotransferase family. RimO subfamily. It depends on [4Fe-4S] cluster as a cofactor.

Its subcellular location is the cytoplasm. The enzyme catalyses L-aspartate(89)-[ribosomal protein uS12]-hydrogen + (sulfur carrier)-SH + AH2 + 2 S-adenosyl-L-methionine = 3-methylsulfanyl-L-aspartate(89)-[ribosomal protein uS12]-hydrogen + (sulfur carrier)-H + 5'-deoxyadenosine + L-methionine + A + S-adenosyl-L-homocysteine + 2 H(+). Catalyzes the methylthiolation of an aspartic acid residue of ribosomal protein uS12. The sequence is that of Ribosomal protein uS12 methylthiotransferase RimO from Acinetobacter baylyi (strain ATCC 33305 / BD413 / ADP1).